Consider the following 295-residue polypeptide: Bifunctional protein FolD (295 aa).

Residues 164–166 (GRS), Ser193, and Ile234 contribute to the NADP(+) site.

Belongs to the tetrahydrofolate dehydrogenase/cyclohydrolase family. As to quaternary structure, homodimer.

It carries out the reaction (6R)-5,10-methylene-5,6,7,8-tetrahydrofolate + NADP(+) = (6R)-5,10-methenyltetrahydrofolate + NADPH. The catalysed reaction is (6R)-5,10-methenyltetrahydrofolate + H2O = (6R)-10-formyltetrahydrofolate + H(+). It participates in one-carbon metabolism; tetrahydrofolate interconversion. In terms of biological role, catalyzes the oxidation of 5,10-methylenetetrahydrofolate to 5,10-methenyltetrahydrofolate and then the hydrolysis of 5,10-methenyltetrahydrofolate to 10-formyltetrahydrofolate. This chain is Bifunctional protein FolD, found in Flavobacterium johnsoniae (strain ATCC 17061 / DSM 2064 / JCM 8514 / BCRC 14874 / CCUG 350202 / NBRC 14942 / NCIMB 11054 / UW101) (Cytophaga johnsonae).